The chain runs to 95 residues: PTKMTRRTEPASSCSTGSLDCCNSSGDATDTSITTLLAGIGLPIGSVTGLVGVTCSPITGIGLGGSGCSSEALCCSNNSFKGLVALGCVPVDLSL.

4 disulfide bridges follow: Cys-14/Cys-74, Cys-21/Cys-68, Cys-22/Cys-55, and Cys-75/Cys-88. 2 N-linked (GlcNAc...) asparagine glycosylation sites follow: Asn-23 and Asn-77.

The protein belongs to the fungal hydrophobin family. In terms of assembly, self-assembles to form functional amyloid fibrils called rodlets. Self-assembly into fibrillar rodlets occurs spontaneously at hydrophobic:hydrophilic interfaces and the rodlets further associate laterally to form amphipathic monolayers.

It localises to the secreted. The protein resides in the cell wall. In terms of biological role, aerial growth, conidiation, and dispersal of filamentous fungi in the environment rely upon a capability of their secreting small amphipathic proteins called hydrophobins (HPBs) with low sequence identity. Class I can self-assemble into an outermost layer of rodlet bundles on aerial cell surfaces, conferring cellular hydrophobicity that supports fungal growth, development and dispersal; whereas Class II form highly ordered films at water-air interfaces through intermolecular interactions but contribute nothing to the rodlet structure. The sequence is that of Class I hydrophobin 13 from Pleurotus ostreatus (strain PC15) (Oyster mushroom).